Consider the following 191-residue polypeptide: uncharacterized protein (191 aa).

In terms of domain architecture, Fe2OG dioxygenase spans 87 to 184 (EFDSALIFHY…RIAITFRQMG (98 aa)).

This is an uncharacterized protein from Acanthamoeba polyphaga mimivirus (APMV).